We begin with the raw amino-acid sequence, 586 residues long: 2-succinyl-5-enolpyruvyl-6-hydroxy-3-cyclohexene-1-carboxylate synthase (586 aa).

It belongs to the TPP enzyme family. MenD subfamily. In terms of assembly, homodimer. It depends on Mg(2+) as a cofactor. The cofactor is Mn(2+). Thiamine diphosphate is required as a cofactor.

It catalyses the reaction isochorismate + 2-oxoglutarate + H(+) = 5-enolpyruvoyl-6-hydroxy-2-succinyl-cyclohex-3-ene-1-carboxylate + CO2. It functions in the pathway quinol/quinone metabolism; 1,4-dihydroxy-2-naphthoate biosynthesis; 1,4-dihydroxy-2-naphthoate from chorismate: step 2/7. The protein operates within quinol/quinone metabolism; menaquinone biosynthesis. Catalyzes the thiamine diphosphate-dependent decarboxylation of 2-oxoglutarate and the subsequent addition of the resulting succinic semialdehyde-thiamine pyrophosphate anion to isochorismate to yield 2-succinyl-5-enolpyruvyl-6-hydroxy-3-cyclohexene-1-carboxylate (SEPHCHC). The protein is 2-succinyl-5-enolpyruvyl-6-hydroxy-3-cyclohexene-1-carboxylate synthase of Geobacillus thermodenitrificans (strain NG80-2).